The primary structure comprises 145 residues: D-aminoacyl-tRNA deacylase (145 aa).

Positions 137–138 (GP) match the Gly-cisPro motif, important for rejection of L-amino acids motif.

This sequence belongs to the DTD family. In terms of assembly, homodimer.

Its subcellular location is the cytoplasm. It catalyses the reaction glycyl-tRNA(Ala) + H2O = tRNA(Ala) + glycine + H(+). It carries out the reaction a D-aminoacyl-tRNA + H2O = a tRNA + a D-alpha-amino acid + H(+). Its function is as follows. An aminoacyl-tRNA editing enzyme that deacylates mischarged D-aminoacyl-tRNAs. Also deacylates mischarged glycyl-tRNA(Ala), protecting cells against glycine mischarging by AlaRS. Acts via tRNA-based rather than protein-based catalysis; rejects L-amino acids rather than detecting D-amino acids in the active site. By recycling D-aminoacyl-tRNA to D-amino acids and free tRNA molecules, this enzyme counteracts the toxicity associated with the formation of D-aminoacyl-tRNA entities in vivo and helps enforce protein L-homochirality. This is D-aminoacyl-tRNA deacylase from Pseudomonas putida (strain ATCC 700007 / DSM 6899 / JCM 31910 / BCRC 17059 / LMG 24140 / F1).